A 118-amino-acid chain; its full sequence is Large ribosomal subunit protein bL20 (118 aa).

The protein belongs to the bacterial ribosomal protein bL20 family.

Functionally, binds directly to 23S ribosomal RNA and is necessary for the in vitro assembly process of the 50S ribosomal subunit. It is not involved in the protein synthesizing functions of that subunit. The sequence is that of Large ribosomal subunit protein bL20 from Oceanobacillus iheyensis (strain DSM 14371 / CIP 107618 / JCM 11309 / KCTC 3954 / HTE831).